A 474-amino-acid chain; its full sequence is GTPase Der (474 aa).

2 EngA-type G domains span residues 2–166 (LRIA…NVPE) and 212–385 (LKIA…TTVS). Residues 8–15 (GRPNVGKS), 55–59 (DTGGV), 118–121 (NKAD), 218–225 (GRPNVGKS), 265–269 (DTAGL), and 330–333 (NKWD) contribute to the GTP site. The KH-like domain occupies 386–470 (SKVPTPVVNK…PFDLEFKEKT (85 aa)).

Belongs to the TRAFAC class TrmE-Era-EngA-EngB-Septin-like GTPase superfamily. EngA (Der) GTPase family. Associates with the 50S ribosomal subunit.

In terms of biological role, GTPase that plays an essential role in the late steps of ribosome biogenesis. This is GTPase Der from Chlamydia abortus (strain DSM 27085 / S26/3) (Chlamydophila abortus).